Consider the following 215-residue polypeptide: N-(5'-phosphoribosyl)anthranilate isomerase (215 aa).

The protein belongs to the TrpF family.

It catalyses the reaction N-(5-phospho-beta-D-ribosyl)anthranilate = 1-(2-carboxyphenylamino)-1-deoxy-D-ribulose 5-phosphate. Its pathway is amino-acid biosynthesis; L-tryptophan biosynthesis; L-tryptophan from chorismate: step 3/5. The chain is N-(5'-phosphoribosyl)anthranilate isomerase from Chlorobium phaeobacteroides (strain DSM 266 / SMG 266 / 2430).